The primary structure comprises 340 residues: Entry-fusion complex protein OPG094 (340 aa).

A disordered region spans residues Met1–Thr20. The N-myristoyl glycine; by host moiety is linked to residue Gly2. Residues Gly2–Asp319 are Virion surface-facing. A helical; Signal-anchor for type II membrane protein transmembrane segment spans residues Leu320–Ile340.

Belongs to the orthopoxvirus OPG086 family. As to quaternary structure, interacts with OPG143. Component of the entry fusion complex (EFC) composed of OPG053, OPG076, OPG086, OPG094, OPG095, OPG099, OPG107, OPG143, OPG104, OPG147 and OPG155. Except for OPG095 and OPG053, each of the EFC proteins is required for assembly or stability of the complex. In terms of processing, unglycosylated because produced in viral factories instead of the classic ER -Golgi route.

Its subcellular location is the virion membrane. Functionally, component of the entry fusion complex (EFC), which consists of 11 proteins. During cell infection, this complex mediates entry of the virion core into the host cytoplasm by a two-step mechanism consisting of lipid mixing of the viral and cellular membranes and subsequent pore formation. The protein is Entry-fusion complex protein OPG094 (OPG094) of Variola virus.